We begin with the raw amino-acid sequence, 367 residues long: DNA polymerase IV (367 aa).

Positions 14–198 constitute a UmuC domain; sequence IIHIDMDAFF…LPIEKFHGVG (185 aa). Mg(2+)-binding residues include D18 and D116. E117 is an active-site residue.

This sequence belongs to the DNA polymerase type-Y family. In terms of assembly, monomer. Mg(2+) serves as cofactor.

It is found in the cytoplasm. The enzyme catalyses DNA(n) + a 2'-deoxyribonucleoside 5'-triphosphate = DNA(n+1) + diphosphate. Its function is as follows. Poorly processive, error-prone DNA polymerase involved in untargeted mutagenesis. Copies undamaged DNA at stalled replication forks, which arise in vivo from mismatched or misaligned primer ends. These misaligned primers can be extended by PolIV. Exhibits no 3'-5' exonuclease (proofreading) activity. May be involved in translesional synthesis, in conjunction with the beta clamp from PolIII. This Streptococcus thermophilus (strain CNRZ 1066) protein is DNA polymerase IV.